Here is a 542-residue protein sequence, read N- to C-terminus: Plasminogen-binding protein PgbB (542 aa).

Positions 399 to 542 (KSASKKSQKG…RRKALEMNKK (144 aa)) are disordered. Composition is skewed to basic and acidic residues over residues 418–435 (QERH…ENKV) and 447–456 (VKTRRPEPIR). The segment covering 457–467 (DQNNATQQGET) has biased composition (polar residues). A compositionally biased stretch (basic and acidic residues) spans 481–542 (NAAKKEVPKP…RRKALEMNKK (62 aa)).

Its subcellular location is the cell surface. In terms of biological role, binds plasminogen, specifically, and in a concentration and lysine-dependent manner. Plasminogen is the precursor of plasmin, a serine protease that cleaves fibrin, fibronectin, laminin and vitronectin. Acquisition of plasminogen/plasmin could enable H.pylori to degrade host components. In Helicobacter pylori (strain ATCC 700392 / 26695) (Campylobacter pylori), this protein is Plasminogen-binding protein PgbB (pgbB).